Reading from the N-terminus, the 698-residue chain is Protein let-99 (698 aa).

Residues 23 to 107 (FRSNLSLKTN…SESRIYLFMK (85 aa)) enclose the DEP domain. Disordered stretches follow at residues 115–188 (PKPR…DDEI) and 653–672 (ITRSRNDWQPPVPDKPQASP). Over residues 146 to 157 (RPPKARLPRRLS) the composition is skewed to basic residues. The span at 178 to 188 (HGFDDHKDDEI) shows a compositional bias: basic and acidic residues.

The protein resides in the cytoplasm. The protein localises to the cell cortex. In terms of biological role, required for the proper orientation of spindles after the establishment of polarity. May play a role in interactions between the astral microtubules and the cortical cytoskeleton. Required for asymmetric forces on nuclei and spindles. Acts downstream of the PAR signaling as an intermediate that transduces polarity information to the machinery that positions the mitotic spindle, possibly by regulating force generation. Regulates gpr-1/2 asymmetric cortical localization during the first embryonic cell divisions. Acts antagonistically to the gpr-1/2 signaling pathway. Regulates mes-1 expression and/or localization pattern during early embryogenesis. The protein is Protein let-99 (let-99) of Caenorhabditis elegans.